Reading from the N-terminus, the 345-residue chain is Protein D345L (345 aa).

Belongs to the asfivirus D345L family. Interacts with IKKA/CHUK and IKBKB.

It is found in the host cytoplasm. Plays a role in the negative regulation of host NF-kappa-B signaling pathway. Mechanistically, recruits IKKA/CHUK and IKBKB to suppress their kinase activity towards NFKBIA. The protein is Protein D345L of Ornithodoros (relapsing fever ticks).